Consider the following 196-residue polypeptide: Vascular-related unknown protein 2 (196 aa).

The interval 84–130 is disordered; the sequence is ANNINTNPKKRRIIHQHKEEEEEELQKGEEEEEDEEDTASSPSNKTK. The segment covering 103–121 has biased composition (acidic residues); sequence EEEEELQKGEEEEEDEEDT.

In terms of biological role, involved in the regulation of plant growth. In Arabidopsis thaliana (Mouse-ear cress), this protein is Vascular-related unknown protein 2.